The primary structure comprises 355 residues: Histidine biosynthesis bifunctional protein HisB (355 aa).

The histidinol-phosphatase stretch occupies residues 1-166 (MKQKILFIDR…DITKEIIKRN (166 aa)). D9 acts as the Nucleophile in catalysis. Mg(2+) is bound by residues D9 and D11. D11 acts as the Proton donor in catalysis. Zn(2+)-binding residues include C93, H95, C101, and C103. Residue D130 coordinates Mg(2+). The tract at residues 167–355 (RYREVIRETK…NTLPTSKGIL (189 aa)) is imidazoleglycerol-phosphate dehydratase.

This sequence in the N-terminal section; belongs to the histidinol-phosphatase family. In the C-terminal section; belongs to the imidazoleglycerol-phosphate dehydratase family. Mg(2+) is required as a cofactor. Zn(2+) serves as cofactor.

It is found in the cytoplasm. The enzyme catalyses D-erythro-1-(imidazol-4-yl)glycerol 3-phosphate = 3-(imidazol-4-yl)-2-oxopropyl phosphate + H2O. It carries out the reaction L-histidinol phosphate + H2O = L-histidinol + phosphate. Its pathway is amino-acid biosynthesis; L-histidine biosynthesis; L-histidine from 5-phospho-alpha-D-ribose 1-diphosphate: step 6/9. It functions in the pathway amino-acid biosynthesis; L-histidine biosynthesis; L-histidine from 5-phospho-alpha-D-ribose 1-diphosphate: step 8/9. This chain is Histidine biosynthesis bifunctional protein HisB, found in Buchnera aphidicola subsp. Schizaphis graminum (strain Sg).